Here is a 552-residue protein sequence, read N- to C-terminus: uncharacterized protein (552 aa).

It belongs to the transposase 25 family.

This is an uncharacterized protein from Sinorhizobium fredii (strain NBRC 101917 / NGR234).